We begin with the raw amino-acid sequence, 30 residues long: Cyclotide hyen-H (30 aa).

Positions 1-30 (KIPCGESCVYIPCISSVLGCSCSNKVCYKD) form a cross-link, cyclopeptide (Lys-Asp). Disulfide bonds link cysteine 4-cysteine 20, cysteine 8-cysteine 22, and cysteine 13-cysteine 27.

Post-translationally, this is a cyclic peptide. As to expression, detected in stems (at protein level).

Its function is as follows. Probably participates in a plant defense mechanism. In Pigea enneasperma (Spade flower), this protein is Cyclotide hyen-H.